The sequence spans 513 residues: Probable DNA ligase (513 aa).

Glutamate 215 contributes to the ATP binding site. Lysine 217 (N6-AMP-lysine intermediate) is an active-site residue. Arginine 222, arginine 237, glutamate 266, phenylalanine 306, arginine 378, and lysine 384 together coordinate ATP.

It belongs to the ATP-dependent DNA ligase family. Mg(2+) is required as a cofactor.

It carries out the reaction ATP + (deoxyribonucleotide)n-3'-hydroxyl + 5'-phospho-(deoxyribonucleotide)m = (deoxyribonucleotide)n+m + AMP + diphosphate.. In terms of biological role, DNA ligase that seals nicks in double-stranded DNA during DNA replication, DNA recombination and DNA repair. In Mycobacterium marinum (strain ATCC BAA-535 / M), this protein is Probable DNA ligase.